The sequence spans 386 residues: Hydrazine synthase subunit beta (386 aa).

The N-terminal stretch at 1-34 (MVIRRKMNKMIRKGMIGAVMLGAAVAISGGVATA) is a signal peptide.

Part of the hydrazine synthase complex that forms an elongated dimer of heterotrimers composed of one alpha, one beta and one gamma subunit.

The protein localises to the anammoxosome. It functions in the pathway nitrogen metabolism. Component of the hydrazine synthase complex that catalyzes the condensation of nitric oxide (NO) with ammonium to form hydrazine. The beta subunit may play a role in modulating transport of the hydroxylamine intermediate through a tunnel between the gamma and alpha subunit's active site. Is involved in anaerobic ammonium oxidation (anammox), a biological process in which nitrite is used as the electron acceptor in the conversion of ammonium to dinitrogen gas (N2) and water; this bacterial process has a major role in the Earth's nitrogen cycle and has been estimated to synthesize up to 50% of the dinitrogen gas emitted into our atmosphere from the oceans. The protein is Hydrazine synthase subunit beta of Kuenenia stuttgartiensis.